The following is a 271-amino-acid chain: Co-chaperone protein DjlA (271 aa).

The Periplasmic segment spans residues 1-6 (MQYWGK). A helical membrane pass occupies residues 7–31 (IIGVAVALLMGGGFWGVVLGLLIGH). At 32–271 (MFDKARSRKM…ELIKQQKGFK (240 aa)) the chain is on the cytoplasmic side. Residues 205–271 (DACNVLGVKP…ELIKQQKGFK (67 aa)) form the J domain.

In terms of assembly, homodimer.

It localises to the cell inner membrane. Functionally, regulatory DnaK co-chaperone. Direct interaction between DnaK and DjlA is needed for the induction of the wcaABCDE operon, involved in the synthesis of a colanic acid polysaccharide capsule, possibly through activation of the RcsB/RcsC phosphotransfer signaling pathway. The colanic acid capsule may help the bacterium survive conditions outside the host. This chain is Co-chaperone protein DjlA, found in Escherichia coli (strain K12).